The primary structure comprises 464 residues: NADH dehydrogenase [ubiquinone] flavoprotein 1, mitochondrial (464 aa).

The N-terminal 20 residues, 1-20, are a transit peptide targeting the mitochondrion; the sequence is MLAARHFLGGLVPVRVSVRF. Residue Lys-81 is modified to N6-acetyllysine; alternate. Lys-81 is subject to N6-succinyllysine; alternate. Position 87–96 (87–96) interacts with NADH; the sequence is GRGGAGFPTG. Lys-104 carries the post-translational modification N6-acetyllysine. Residue 199–247 participates in FMN binding; that stretch reads RGAGAYICGEETALIESIEGKQGKPRLKPPFPADVGVFGCPTTVANVET. An Omega-N-methylarginine modification is found at Arg-257. An N6-acetyllysine modification is found at Lys-375. Cys-379, Cys-382, Cys-385, and Cys-425 together coordinate [4Fe-4S] cluster.

It belongs to the complex I 51 kDa subunit family. In terms of assembly, core subunit of respiratory chain NADH dehydrogenase (Complex I) which is composed of 45 different subunits. This is a component of the flavoprotein-sulfur (FP) fragment of the enzyme. Interacts with RAB5IF. FMN is required as a cofactor. Requires [4Fe-4S] cluster as cofactor.

Its subcellular location is the mitochondrion inner membrane. It carries out the reaction a ubiquinone + NADH + 5 H(+)(in) = a ubiquinol + NAD(+) + 4 H(+)(out). Functionally, core subunit of the mitochondrial membrane respiratory chain NADH dehydrogenase (Complex I) which catalyzes electron transfer from NADH through the respiratory chain, using ubiquinone as an electron acceptor. Part of the peripheral arm of the enzyme, where the electrons from NADH are accepted by flavin mononucleotide (FMN) and then passed along a chain of iron-sulfur clusters by electron tunnelling to the final acceptor ubiquinone. Contains FMN, which is the initial electron acceptor as well as one iron-sulfur cluster. This is NADH dehydrogenase [ubiquinone] flavoprotein 1, mitochondrial from Mus musculus (Mouse).